Reading from the N-terminus, the 296-residue chain is Phosphatidylglycerol--prolipoprotein diacylglyceryl transferase (296 aa).

7 consecutive transmembrane segments (helical) span residues 17-37 (LAVR…IVVG), 59-79 (MMFY…VLFY), 97-117 (GGMS…LFAW), 129-149 (FVAP…FING), 204-224 (SQLY…FLFA), 230-250 (MGAI…TVEF), and 257-277 (FLGL…PMIL). Arginine 142 is a binding site for a 1,2-diacyl-sn-glycero-3-phospho-(1'-sn-glycerol).

Belongs to the Lgt family.

It localises to the cell inner membrane. The enzyme catalyses L-cysteinyl-[prolipoprotein] + a 1,2-diacyl-sn-glycero-3-phospho-(1'-sn-glycerol) = an S-1,2-diacyl-sn-glyceryl-L-cysteinyl-[prolipoprotein] + sn-glycerol 1-phosphate + H(+). Its pathway is protein modification; lipoprotein biosynthesis (diacylglyceryl transfer). Its function is as follows. Catalyzes the transfer of the diacylglyceryl group from phosphatidylglycerol to the sulfhydryl group of the N-terminal cysteine of a prolipoprotein, the first step in the formation of mature lipoproteins. This is Phosphatidylglycerol--prolipoprotein diacylglyceryl transferase from Burkholderia cenocepacia (strain HI2424).